We begin with the raw amino-acid sequence, 342 residues long: Transcriptional regulator of the unfolded protein response hacA (342 aa).

Positions 1–105 (MEDNFASVVE…TSRERKRLEM (105 aa)) are disordered. 2 stretches are compositionally biased toward basic and acidic residues: residues 35–48 (PETK…EEKK) and 74–88 (KTED…ERVL). Residues 80–143 (EQRRIERVLR…NRLSQQLAQL (64 aa)) enclose the bZIP domain. Positions 82 to 135 (RRIERVLRNRAAAQTSRERKRLEMEKLENEKIQMEQQNQFLLQRLSQMEAENNR) are basic motif. Positions 136–143 (LSQQLAQL) are leucine-zipper. 2 disordered regions span residues 146–167 (EVRN…SPTL) and 306–330 (EPAH…GAST). Positions 315–330 (TPYQTSGLQPSLGAST) are enriched in polar residues.

Belongs to the bZIP family.

The protein localises to the nucleus. Functionally, master transcriptional regulator of the unfolded protein response (UPR) that recognizes and binds to the UPR element (UPRE) in the promoter of UPR-regulated genes. In the canonical UPR pathway, the ireA RNase splices the cytoplasmic mRNA hacA, which alters the reading frame to allow translation of the bZIP transcription factor hacA. Induces the expression of pmrA, scrA and spfA in response to UPR. This Aspergillus fumigatus (strain ATCC MYA-4609 / CBS 101355 / FGSC A1100 / Af293) (Neosartorya fumigata) protein is Transcriptional regulator of the unfolded protein response hacA.